The primary structure comprises 303 residues: 4-sulfomuconolactone hydrolase (303 aa).

It belongs to the metallo-dependent hydrolases superfamily. Sulfomuconolactone hydrolase family. As to quaternary structure, monomer. Zn(2+) serves as cofactor.

The catalysed reaction is 4-sulfomuconolactone + H2O = maleylacetate + sulfite + 2 H(+). With respect to regulation, completely inhibited by ZnCl(2) and CuCl(2). Functionally, involved in the degradation of 4-sulfocatechol which is a central intermediate in the degradation of substituted sulfonated benzenes. Catalyzes the hydrolytical desulfonation of 4-sulfomuconolactone to yield maleylacetate. This Hydrogenophaga intermedia protein is 4-sulfomuconolactone hydrolase.